The primary structure comprises 103 residues: Serine protease inhibitor 4 (103 aa).

A disulfide bridge links cysteine 56 with cysteine 73.

This sequence belongs to the protease inhibitor I3 (leguminous Kunitz-type inhibitor) family.

It is found in the vacuole. Functionally, inhibitor of serine protease. May protect the plant by inhibiting proteases of invading organisms. In Solanum tuberosum (Potato), this protein is Serine protease inhibitor 4.